Reading from the N-terminus, the 490-residue chain is Beta-glucosidase 42 (490 aa).

A beta-D-glucoside contacts are provided by residues Q35, H137, 182–183 (NE), Y317, and E388. E183 serves as the catalytic Proton donor. E388 functions as the Nucleophile in the catalytic mechanism. N-linked (GlcNAc...) asparagine glycosylation occurs at N420. Residues W437, 444 to 445 (EW), and F453 each bind a beta-D-glucoside.

The protein belongs to the glycosyl hydrolase 1 family. Expressed at low levels predominantly in root epidermal cells.

It catalyses the reaction Hydrolysis of terminal, non-reducing beta-D-glucosyl residues with release of beta-D-glucose.. Its function is as follows. Glucosidase that hydrolyzes scopolin and various beta-glucosides, cellooligosaccharides (mainly cellotriose) and laminarioligosaccharides. Can use p-nitrophenyl-beta-glucosides (pNP beta-Glc) and p-nitrophenyl-beta-D-fucosides (pNP beta-D-Fuc) as substrates, and, to a lower extent, beta-galactosides, beta-mannosides and beta-xylosides. Involved in the secretion of root-derived phenolics upon iron ions (Fe) depletion. Promotes disease resistance toward B.cinerea, H.arabidopsidis and P.syringae pv. tomato DC3000. Required during rhizobacteria-mediated (e.g. P.fluorescens WCS417r) broad-spectrum induced systemic resistance (ISR) against several pathogens. The polypeptide is Beta-glucosidase 42 (Arabidopsis thaliana (Mouse-ear cress)).